The chain runs to 171 residues: Co-chaperone protein HscB (171 aa).

The 73-residue stretch at 2 to 74 (DYFTLFGLPA…LMRAEYLLSL (73 aa)) folds into the J domain.

This sequence belongs to the HscB family. In terms of assembly, interacts with HscA and stimulates its ATPase activity. Interacts with IscU.

In terms of biological role, co-chaperone involved in the maturation of iron-sulfur cluster-containing proteins. Seems to help targeting proteins to be folded toward HscA. This chain is Co-chaperone protein HscB, found in Escherichia coli (strain SE11).